Consider the following 1079-residue polypeptide: Tudor domain-containing protein 7A (1079 aa).

An HTH OST-type 1 domain is found at 3 to 76 (DVELVKKMLR…TGEVMCFAGV (74 aa)). The disordered stretch occupies residues 153-175 (LPSSRAPAWQMNRKSPVPEKTSV). 2 consecutive HTH OST-type domains span residues 205-270 (DVEL…RLVY) and 366-434 (LTTE…ILYT). 2 Tudor domains span residues 519 to 576 (SPKI…FMTL) and 708 to 765 (RPFC…FLKE).

The protein belongs to the TDRD7 family.

The protein resides in the cytoplasm. Component of specific cytoplasmic RNA granules involved in post-transcriptional regulation of specific genes: probably acts by binding to specific mRNAs and regulating their translation. Probably required during spermatogenesis. Required for structural integrity of granules in primordial germ cells (PGCs). The chain is Tudor domain-containing protein 7A (tdrd7a) from Danio rerio (Zebrafish).